The following is an 88-amino-acid chain: Small ribosomal subunit protein bS18A (88 aa).

Belongs to the bacterial ribosomal protein bS18 family. In terms of assembly, part of the 30S ribosomal subunit. Forms a tight heterodimer with protein bS6.

Its function is as follows. Binds as a heterodimer with protein bS6 to the central domain of the 16S rRNA, where it helps stabilize the platform of the 30S subunit. The chain is Small ribosomal subunit protein bS18A from Mycolicibacterium gilvum (strain PYR-GCK) (Mycobacterium gilvum (strain PYR-GCK)).